Consider the following 79-residue polypeptide: Acyl carrier protein (79 aa).

The Carrier domain maps to 3–78 (QEILEKVRSI…DAVSYIQEKK (76 aa)). At serine 38 the chain carries O-(pantetheine 4'-phosphoryl)serine.

This sequence belongs to the acyl carrier protein (ACP) family. In terms of processing, 4'-phosphopantetheine is transferred from CoA to a specific serine of apo-ACP by AcpS. This modification is essential for activity because fatty acids are bound in thioester linkage to the sulfhydryl of the prosthetic group.

It localises to the cytoplasm. Its pathway is lipid metabolism; fatty acid biosynthesis. Functionally, carrier of the growing fatty acid chain in fatty acid biosynthesis. The protein is Acyl carrier protein of Synechococcus sp. (strain RCC307).